We begin with the raw amino-acid sequence, 1180 residues long: Integrin alpha-1 (1180 aa).

The N-terminal stretch at 1–28 (MVPRRPASLEVTVACIWLLTVILGFCVS) is a signal peptide. The Extracellular segment spans residues 29–1142 (FNVDVKNSMS…SKDGLPGRVP (1114 aa)). Residues 30 to 91 (NVDVKNSMSF…CPVGRERAMP (62 aa)) form an FG-GAP 1 repeat. An intrachain disulfide couples cysteine 82 to cysteine 92. Asparagine 100, asparagine 105, asparagine 112, asparagine 217, asparagine 317, asparagine 341, asparagine 402, asparagine 418, and asparagine 459 each carry an N-linked (GlcNAc...) asparagine glycan. An FG-GAP 2 repeat occupies 101–160 (TSIPNVTEIKENMTFGSTLVTNPNGGFLACGPLYAYRCGHLHYTTGICSDVSPTFQVVNS). The region spanning 175–364 (IVLDGSNSIY…LGERIFALEA (190 aa)) is the VWFA domain. An FG-GAP 3 repeat occupies 365 to 417 (TADQSAASFEMEMSQTGFSAHYSQDWVMLGAVGAYDWNGTVVMQKANQMVIPH). 4 FG-GAP repeats span residues 422–474 (QTEP…DGNI), 475–537 (NILQ…RFEY), 556–614 (SCTK…TIRE), and 618–678 (QRIP…FEPN). Ca(2+)-binding residues include aspartate 497, aspartate 499, aspartate 501, and aspartate 505. A glycan (N-linked (GlcNAc...) asparagine) is linked at asparagine 531. Aspartate 579, asparagine 581, aspartate 583, aspartate 587, aspartate 641, asparagine 643, aspartate 645, and aspartate 649 together coordinate Ca(2+). Cysteine 687 and cysteine 696 are joined by a disulfide. N-linked (GlcNAc...) asparagine glycosylation is found at asparagine 698, asparagine 747, and asparagine 779. An intrachain disulfide couples cysteine 702 to cysteine 755. Cysteine 807 and cysteine 813 are oxidised to a cystine. N-linked (GlcNAc...) asparagine glycosylation is found at asparagine 820, asparagine 839, asparagine 882, asparagine 907, asparagine 938, asparagine 965, asparagine 973, and asparagine 1007. An intrachain disulfide couples cysteine 877 to cysteine 885. Cystine bridges form between cysteine 1029-cysteine 1062 and cysteine 1066-cysteine 1073. Residues asparagine 1084, asparagine 1103, and asparagine 1114 are each glycosylated (N-linked (GlcNAc...) asparagine). A helical transmembrane segment spans residues 1143–1165 (LWVILLSAFAGLLLLMLLILALW). The Cytoplasmic portion of the chain corresponds to 1166–1180 (KIGFFKRPLKKKMEK). Positions 1168 to 1172 (GFFKR) match the GFFKR motif motif.

It belongs to the integrin alpha chain family. In terms of assembly, heterodimer of an alpha and a beta subunit. Alpha-1 associates with beta-1. Interacts with RAB21. Interacts (via cytoplasmic domain) with PTPN2; activates PTPN2 phosphatase activity towards EGFR and negatively regulates EGF signaling.

The protein resides in the membrane. Functionally, integrin alpha-1/beta-1 is a receptor for laminin and collagen. It recognizes the proline-hydroxylated sequence G-F-P-G-E-R in collagen. Involved in anchorage-dependent, negative regulation of EGF-stimulated cell growth. The chain is Integrin alpha-1 (Itga1) from Rattus norvegicus (Rat).